Reading from the N-terminus, the 45-residue chain is C-phycocyanin beta subunit (45 aa).

Belongs to the phycobiliprotein family. Heterodimer of an alpha and a beta subunit. The hererodimer further assembles into trimers and the trimers into hexamers. Contains two covalently linked bilin chromophores.

It localises to the cellular thylakoid membrane. Functionally, light-harvesting photosynthetic bile pigment-protein from the phycobiliprotein complex (phycobilisome, PBS). Phycocyanin is the major phycobiliprotein in the PBS rod. The sequence is that of C-phycocyanin beta subunit (cpcB) from Limnospira fusiformis (Arthrospira fusiformis).